The following is a 240-amino-acid chain: LexA repressor (240 aa).

The segment at residues 26–46 is a DNA-binding region (H-T-H motif); it reads FDEMKDALDLASKSGIHRLIT. Residues Ser-160 and Lys-198 each act as for autocatalytic cleavage activity in the active site.

Belongs to the peptidase S24 family. As to quaternary structure, homodimer.

The enzyme catalyses Hydrolysis of Ala-|-Gly bond in repressor LexA.. Represses a number of genes involved in the response to DNA damage (SOS response), including recA and lexA. In the presence of single-stranded DNA, RecA interacts with LexA causing an autocatalytic cleavage which disrupts the DNA-binding part of LexA, leading to derepression of the SOS regulon and eventually DNA repair. The chain is LexA repressor from Agrobacterium fabrum (strain C58 / ATCC 33970) (Agrobacterium tumefaciens (strain C58)).